A 261-amino-acid chain; its full sequence is MRDSKRVVLYISIMVLSIFIIGCGKGNEIKEDAKEEQIKKSFAKTLDMYPIKNLEDLYDKEGYRDGEFKKGDKGMWTIYTDFAKSNRPGVLDNEGMVLNLDRNTRTAKGYYFVDTIYDNHENSYSKNYRVEMKNNKIILLDKVEDQKLKERIENFKFFGQYADFKSLKSYNHGDVSINSNVPSYDAKFKMSNKDENVKQLRSRYNIPTDKAPILKMHIDGDLKGSSVGYKKLEIDFSKEENSELSIVDSLNFQPAKNKDDE.

The signal sequence occupies residues Met1 to Gly22. Cys23 carries N-palmitoyl cysteine lipidation. Cys23 carries the S-diacylglycerol cysteine lipid modification.

The protein belongs to the staphylococcal tandem lipoprotein family.

It is found in the cell membrane. This is an uncharacterized protein from Staphylococcus aureus (strain N315).